A 122-amino-acid chain; its full sequence is Large ribosomal subunit protein uL14 (122 aa).

It belongs to the universal ribosomal protein uL14 family. In terms of assembly, part of the 50S ribosomal subunit. Forms a cluster with proteins L3 and L19. In the 70S ribosome, L14 and L19 interact and together make contacts with the 16S rRNA in bridges B5 and B8.

Its function is as follows. Binds to 23S rRNA. Forms part of two intersubunit bridges in the 70S ribosome. This is Large ribosomal subunit protein uL14 from Solidesulfovibrio magneticus (strain ATCC 700980 / DSM 13731 / RS-1) (Desulfovibrio magneticus).